The following is a 58-amino-acid chain: Large ribosomal subunit protein uL30 (58 aa).

This sequence belongs to the universal ribosomal protein uL30 family. Part of the 50S ribosomal subunit.

The sequence is that of Large ribosomal subunit protein uL30 from Trichlorobacter lovleyi (strain ATCC BAA-1151 / DSM 17278 / SZ) (Geobacter lovleyi).